A 506-amino-acid polypeptide reads, in one-letter code: ATP synthase subunit alpha, plastid (506 aa).

ATP is bound at residue 170–177 (GDRQTGKT).

The protein belongs to the ATPase alpha/beta chains family. As to quaternary structure, F-type ATPases have 2 components, CF(1) - the catalytic core - and CF(0) - the membrane proton channel. CF(1) has five subunits: alpha(3), beta(3), gamma(1), delta(1), epsilon(1). CF(0) has four main subunits: a, b, b' and c.

The protein resides in the plastid membrane. It catalyses the reaction ATP + H2O + 4 H(+)(in) = ADP + phosphate + 5 H(+)(out). In terms of biological role, produces ATP from ADP in the presence of a proton gradient across the membrane. The alpha chain is a regulatory subunit. The polypeptide is ATP synthase subunit alpha, plastid (Prototheca wickerhamii).